The chain runs to 739 residues: Poly(A) polymerase alpha (739 aa).

Residues 1–17 (MPFPVTTQGSQQTQPPQ) are compositionally biased toward low complexity. A disordered region spans residues 1–22 (MPFPVTTQGSQQTQPPQRHYGI). Phosphoserine is present on residues S10 and S24. ATP contacts are provided by residues 100–102 (FGS), T109, 113–115 (DID), D167, K228, Y237, and 246–247 (GV). Mg(2+) contacts are provided by D113, D115, and D167. Glycyl lysine isopeptide (Lys-Gly) (interchain with G-Cter in SUMO) cross-links involve residues K444, K445, K506, and K507. A Nuclear localization signal 1 motif is present at residues 490–507 (RKQLHQLLPSHVLQKRKK). A ser/Thr-rich region spans residues 508–643 (HSTEGVKLTA…TKVPNPIVGV (136 aa)). A compositionally biased stretch (low complexity) spans 523 to 534 (LDLSMDSDNSMS). A disordered region spans residues 523–725 (LDLSMDSDNS…SDIPALPANP (203 aa)). The span at 535 to 557 (VPSPTSAMKTSPLNSSGSSQGRN) shows a compositional bias: polar residues. S537 carries the phosphoserine; by MAPK modification. S558 is subject to Phosphoserine. Residues 566-582 (ASVTSIQASEVSVPQAN) show a composition bias toward polar residues. Composition is skewed to low complexity over residues 583–594 (SSESPGGPSSES) and 611–622 (TVSRVVSSTRLV). An N6-acetyllysine mark is found at K635 and K644. A Nuclear localization signal 2 motif is present at residues 644–659 (KRTSSPNKEESPKKTK). Composition is skewed to basic and acidic residues over residues 650–660 (NKEESPKKTKT) and 676–686 (GHDKTETKEQV). The required for interaction with NUDT21 stretch occupies residues 671–739 (CLALSGHDKT…KNSIKLRLNR (69 aa)). Over residues 691–715 (SAVQSETVPASASLLASQKTSSTDL) the composition is skewed to polar residues. K730 is modified (N6-acetyllysine; alternate). A Glycyl lysine isopeptide (Lys-Gly) (interchain with G-Cter in SUMO); alternate cross-link involves residue K730. Position 732 is a phosphoserine (S732). K734 carries the post-translational modification N6-acetyllysine; alternate. Residue K734 forms a Glycyl lysine isopeptide (Lys-Gly) (interchain with G-Cter in SUMO); alternate linkage.

This sequence belongs to the poly(A) polymerase family. As to quaternary structure, monomer. Found in a complex with CPSF1, FIP1L1 and PAPOLA. Interacts with AHCYL1 and FIP1L1; the interaction with AHCYL1 seems to increase interaction with FIP1L1. Interacts with NUDT21; the interaction is diminished by acetylation. Interacts with KPNB1; the interaction promotes PAP nuclear import and is inhibited by acetylation of PAP. Mg(2+) serves as cofactor. Requires Mn(2+) as cofactor. In terms of processing, polysumoylated. Varying sumoylation depending on tissue- and cell-type. Highly sumoylated in bladder and NIH 3T3 cells. Sumoylation is required for nuclear localization and enhances PAP stability. Desumoylated by SENP1. Inhibits polymerase activity. Post-translationally, hyperphosphorylation on multiple CDK2 consensus and non-consensus sites in the C-terminal Ser/Thr-rich region represses PAP activity in late M-phase. Phosphorylation/dephosphorylation may regulate the interaction between PAP and CPSF. Acetylated in the C-terminus. Acetylation decreases interaction with NUDT21 and KPNB1, and inhibits nuclear localization through inhibiting binding to the importin alpha/beta complex. As to expression, expressed in brain, thymus, lung, kidney, bladder, testis and spleen.

The protein resides in the nucleus. The catalysed reaction is RNA(n) + ATP = RNA(n)-3'-adenine ribonucleotide + diphosphate. Its function is as follows. Polymerase that creates the 3'-poly(A) tail of mRNA's. Also required for the endoribonucleolytic cleavage reaction at some polyadenylation sites. May acquire specificity through interaction with a cleavage and polyadenylation specificity factor (CPSF) at its C-terminus. This is Poly(A) polymerase alpha (Papola) from Mus musculus (Mouse).